Consider the following 327-residue polypeptide: GTPase Obg (327 aa).

An Obg domain is found at 2 to 160; that stretch reads HLFKDSLNLI…LNLRLELSLI (159 aa). The region spanning 161 to 326 is the OBG-type G domain; it reads ADIGLVGLPN…LVSEFFSLVK (166 aa). Residues 167 to 174, 192 to 196, 213 to 216, 280 to 283, and 307 to 309 each bind GTP; these read GLPNAGKS, FTTKI, DLPG, SKLD, and SIY. 2 residues coordinate Mg(2+): S174 and T194.

This sequence belongs to the TRAFAC class OBG-HflX-like GTPase superfamily. OBG GTPase family. As to quaternary structure, monomer. Mg(2+) is required as a cofactor.

It localises to the cytoplasm. An essential GTPase which binds GTP, GDP and possibly (p)ppGpp with moderate affinity, with high nucleotide exchange rates and a fairly low GTP hydrolysis rate. Plays a role in control of the cell cycle, stress response, ribosome biogenesis and in those bacteria that undergo differentiation, in morphogenesis control. This Borrelia duttonii (strain Ly) protein is GTPase Obg.